The following is a 292-amino-acid chain: ATP synthase gamma chain (292 aa).

It belongs to the ATPase gamma chain family. F-type ATPases have 2 components, CF(1) - the catalytic core - and CF(0) - the membrane proton channel. CF(1) has five subunits: alpha(3), beta(3), gamma(1), delta(1), epsilon(1). CF(0) has three main subunits: a, b and c.

Its subcellular location is the cell membrane. Functionally, produces ATP from ADP in the presence of a proton gradient across the membrane. The gamma chain is believed to be important in regulating ATPase activity and the flow of protons through the CF(0) complex. The chain is ATP synthase gamma chain from Streptococcus suis (strain 05ZYH33).